Here is a 425-residue protein sequence, read N- to C-terminus: Polyribonucleotide 5'-hydroxyl-kinase Clp1 (425 aa).

ATP contacts are provided by residues glutamate 22, lysine 62, and 124–129 (DVGKST).

Belongs to the Clp1 family. Clp1 subfamily. Component of the tRNA splicing endonuclease complex, composed of CLP1, TSEN2, TSEN15, TSEN34 and TSEN54. Component of pre-mRNA cleavage complex II (CF-II). Also associates with numerous components of the pre-mRNA cleavage complex I (CF-I/CFIm), including NUDT21, CPSF2, CPSF3, CPSF6 and CPSF7. Interacts with CSTF2 and SYMPK. Mg(2+) serves as cofactor. It depends on Mn(2+) as a cofactor. The cofactor is Ni(2+).

The protein resides in the nucleus. It carries out the reaction a 5'-end dephospho-2'-deoxyribonucleoside-DNA + ATP = a 5'-end 5'-phospho-2'-deoxyribonucleoside-DNA + ADP + H(+). The enzyme catalyses a 5'-end dephospho-ribonucleoside-RNA + ATP = a 5'-end 5'-phospho-ribonucleoside-RNA + ADP + H(+). Polynucleotide kinase that can phosphorylate the 5'-hydroxyl groups of double-stranded RNA (dsRNA), single-stranded RNA (ssRNA), double-stranded DNA (dsDNA) and double-stranded DNA:RNA hybrids. dsRNA is phosphorylated more efficiently than dsDNA, and the RNA component of a DNA:RNA hybrid is phosphorylated more efficiently than the DNA component. Plays a key role in both tRNA splicing and mRNA 3'-end formation. Component of the tRNA splicing endonuclease complex: phosphorylates the 5'-terminus of the tRNA 3'-exon during tRNA splicing; this phosphorylation event is a prerequisite for the subsequent ligation of the two exon halves and the production of a mature tRNA. Its role in tRNA splicing and maturation is required for cerebellar development. Component of the pre-mRNA cleavage complex II (CF-II), which seems to be required for mRNA 3'-end formation. Also phosphorylates the 5'-terminus of exogenously introduced short interfering RNAs (siRNAs), which is a necessary prerequisite for their incorporation into the RNA-induced silencing complex (RISC). However, endogenous siRNAs and microRNAs (miRNAs) that are produced by the cleavage of dsRNA precursors by DICER1 already contain a 5'-phosphate group, so this protein may be dispensible for normal RNA-mediated gene silencing. The sequence is that of Polyribonucleotide 5'-hydroxyl-kinase Clp1 from Bos taurus (Bovine).